We begin with the raw amino-acid sequence, 513 residues long: ATP synthase subunit alpha (513 aa).

ATP is bound at residue 169-176; it reads GDRQTGKT.

It belongs to the ATPase alpha/beta chains family. As to quaternary structure, F-type ATPases have 2 components, CF(1) - the catalytic core - and CF(0) - the membrane proton channel. CF(1) has five subunits: alpha(3), beta(3), gamma(1), delta(1), epsilon(1). CF(0) has three main subunits: a(1), b(2) and c(9-12). The alpha and beta chains form an alternating ring which encloses part of the gamma chain. CF(1) is attached to CF(0) by a central stalk formed by the gamma and epsilon chains, while a peripheral stalk is formed by the delta and b chains.

The protein localises to the cell inner membrane. The enzyme catalyses ATP + H2O + 4 H(+)(in) = ADP + phosphate + 5 H(+)(out). Its function is as follows. Produces ATP from ADP in the presence of a proton gradient across the membrane. The alpha chain is a regulatory subunit. The sequence is that of ATP synthase subunit alpha from Bordetella avium (strain 197N).